The following is a 451-amino-acid chain: Tubulin alpha-2 chain (451 aa).

Glutamine 11 is a GTP binding site. Lysine 40 is modified (N6-acetyllysine). GTP contacts are provided by glutamate 71, glycine 144, threonine 145, threonine 179, asparagine 206, and asparagine 228. Position 71 (glutamate 71) interacts with Mg(2+). Residue glutamate 254 is part of the active site.

The protein belongs to the tubulin family. Dimer of alpha and beta chains. A typical microtubule is a hollow water-filled tube with an outer diameter of 25 nm and an inner diameter of 15 nM. Alpha-beta heterodimers associate head-to-tail to form protofilaments running lengthwise along the microtubule wall with the beta-tubulin subunit facing the microtubule plus end conferring a structural polarity. Microtubules usually have 13 protofilaments but different protofilament numbers can be found in some organisms and specialized cells. Mg(2+) serves as cofactor. Post-translationally, undergoes a tyrosination/detyrosination cycle, the cyclic removal and re-addition of a C-terminal tyrosine residue by the enzymes tubulin tyrosine carboxypeptidase (TTCP) and tubulin tyrosine ligase (TTL), respectively. In terms of processing, acetylation of alpha chains at Lys-40 stabilizes microtubules and affects affinity and processivity of microtubule motors. This modification has a role in multiple cellular functions, ranging from cell motility, cell cycle progression or cell differentiation to intracellular trafficking and signaling.

Its subcellular location is the cytoplasm. The protein resides in the cytoskeleton. It catalyses the reaction GTP + H2O = GDP + phosphate + H(+). Functionally, tubulin is the major constituent of microtubules, a cylinder consisting of laterally associated linear protofilaments composed of alpha- and beta-tubulin heterodimers. Microtubules grow by the addition of GTP-tubulin dimers to the microtubule end, where a stabilizing cap forms. Below the cap, tubulin dimers are in GDP-bound state, owing to GTPase activity of alpha-tubulin. The chain is Tubulin alpha-2 chain (TUBA2) from Hordeum vulgare (Barley).